The following is a 172-amino-acid chain: Adenine phosphoribosyltransferase (172 aa).

The protein belongs to the purine/pyrimidine phosphoribosyltransferase family. In terms of assembly, homodimer.

The protein resides in the cytoplasm. It carries out the reaction AMP + diphosphate = 5-phospho-alpha-D-ribose 1-diphosphate + adenine. It functions in the pathway purine metabolism; AMP biosynthesis via salvage pathway; AMP from adenine: step 1/1. Functionally, catalyzes a salvage reaction resulting in the formation of AMP, that is energically less costly than de novo synthesis. This chain is Adenine phosphoribosyltransferase, found in Clostridium tetani (strain Massachusetts / E88).